Consider the following 602-residue polypeptide: Oligoendopeptidase F, chromosomal (602 aa).

H388 is a binding site for Zn(2+). The active site involves E389. Zn(2+) contacts are provided by H392 and H395.

It belongs to the peptidase M3B family. The cofactor is Zn(2+).

Functionally, hydrolyzes peptides containing between 7 and 17 amino acids with a rather wide specificity. In Lactococcus lactis subsp. cremoris (Streptococcus cremoris), this protein is Oligoendopeptidase F, chromosomal (pepF2).